Consider the following 304-residue polypeptide: Fluoroacetate dehalogenase (304 aa).

Positions 26 to 151 (PALLLLHGFP…FVARAYWHWY (126 aa)) constitute an AB hydrolase-1 domain. Asp-104 serves as the catalytic Nucleophile. Fluoroacetate-binding residues include Arg-105, Arg-108, His-149, Trp-150, and Tyr-212. The Proton acceptor role is filled by His-271.

It belongs to the AB hydrolase superfamily. Epoxide hydrolase family. In terms of assembly, homodimer.

The catalysed reaction is a haloacetate + H2O = a halide anion + glycolate + H(+). It catalyses the reaction fluoroacetate + H2O = fluoride + glycolate + H(+). Functionally, catalyzes the hydrolytic defluorination of fluoroacetate to produce glycolate. Has only very low activity towards chloroacetate and bromoacetate. This Burkholderia sp protein is Fluoroacetate dehalogenase (fac-dex).